The following is a 241-amino-acid chain: Keratin-associated protein 5-5 (241 aa).

Tandem repeats lie at residues 35–38 (CCKP), 41–44 (CCKP), 47–50 (CCVP), 105–108 (CCKP), 115–118 (CCKP), 133–136 (CCKP), 143–146 (CCKP), 161–164 (CCKP), 171–174 (CCKP), 181–184 (CCKP), 191–194 (CCKP), 201–204 (CCKP), 211–214 (CCKP), 221–224 (CCKP), and 231–234 (CCAP). Positions 35–234 (CCKPVCCCKP…CCCQSSCCAP (200 aa)) are 15 X 4 AA repeats of C-C-X-P.

The protein belongs to the KRTAP type 5 family. As to quaternary structure, interacts with hair keratins.

In the hair cortex, hair keratin intermediate filaments are embedded in an interfilamentous matrix, consisting of hair keratin-associated protein (KRTAP), which are essential for the formation of a rigid and resistant hair shaft through their extensive disulfide bond cross-linking with abundant cysteine residues of hair keratins. The matrix proteins include the high-sulfur and high-glycine-tyrosine keratins. This Mus musculus (Mouse) protein is Keratin-associated protein 5-5.